We begin with the raw amino-acid sequence, 31 residues long: Antifungal protein 1 (31 aa).

Composition is skewed to basic and acidic residues over residues 1–10 (PGAGSQEERM) and 18–31 (DFSH…MVRE). Residues 1–31 (PGAGSQEERMQGQMEGQDFSHEERFLSMVRE) form a disordered region.

In terms of assembly, heterodimer; disulfide-linked. Disulfide bonds.

Its function is as follows. Has antifungal activity against C.gloeosporioides but not against B.cinerea and Fusarium sp. or against various yeasts. Has no antibacterial activity. The sequence is that of Antifungal protein 1 from Passiflora alata (Winged-stem passion flower).